The following is a 726-amino-acid chain: MAIGQPFATALGCTIIWRAAGALFGPPAAGDYQGRFPMLFSQHTRLVHVDSPLGPEVLQLQRLEGREELGRLFSHELELVSSNPALPLDALLGKPMSLALELPGGSRRYFHGIVARCSQGAGAGQFASYQVTLRPWLWLLTRTSDCRIFQNQKVPDIIKQVFRDLGFSDFEDALSRSYREWEYCVQYRETSFDFVSRLMEQEGIYYWFRHEKKRHILVLSDAYGAHHSPAGYTSVPYYPPSLGHRERDHFFDWHMAREVQPGSLSLNDYDFQRPGTRLEVRSNVGRAHAAADYPLYDYPGEYVQSQDGEHYARTRIEAIQTQYERVRLRGCARGIGAGHLFHLSNYPRLDQNREYLVVGAEYRVVQELYETGNGGGGAQFESELDCIDAGQAFRPLPSTPVPVVRGPQTAVVVGPKGEEIWTDQYGRVKVHFHWDRHDQSNENSSCWMRVSQAWAGKNWGSIQIPRIGQEVIVSFLEGDPDRPIITGRVYNAEQTVPYELPANATQSGTKSRSSKGGTPANFNEIRMEDKKGAEQLFIHAERNQDIEVENDESHWVGHDRTKTIDHDETVHVKHDRTETVDNNETITVHANRSKTVDRNETVRIGMNKTETILMASLQNVGMGRMENVGLGYSLNVGMMMNTVVGLNQSTQVMKKKTLSVGDSYEVSVGGSDDGSKITLDGQSITLGSQRIELTADREILLRCGQSTIRLTPGEIEILSPNVDINC.

The interval 502–522 is disordered; sequence ANATQSGTKSRSSKGGTPANF. Residues 507–518 are compositionally biased toward low complexity; that stretch reads SGTKSRSSKGGT.

The protein belongs to the VgrG protein family. As to quaternary structure, forms homomultimers. Part of the type VI secretion system (T6SS).

Its subcellular location is the secreted. Part of the H1 type VI secretion system (H1-T6SS) specialized secretion system, which delivers several virulence factors in both prokaryotic and eukaryotic cells during infection. Allows the delivery of the Tse5/RhsP1 toxin to target cells where it exerts its toxicity. This Pseudomonas aeruginosa (strain ATCC 15692 / DSM 22644 / CIP 104116 / JCM 14847 / LMG 12228 / 1C / PRS 101 / PAO1) protein is Type VI secretion system spike protein VgrG1c.